Consider the following 160-residue polypeptide: Fluoride-specific ion channel FluC (160 aa).

A run of 4 helical transmembrane segments spans residues 5-25 (LFISYGAILGASLRWAIGLLF), 34-54 (FGTLIANLFGCLIIGVLLGLF), 67-87 (FLITGFLGSLTTFSSFSSEVV), and 99-119 (FCVLMMHLFGCLAMTVLGIWI). Na(+) is bound by residues G74 and T77.

It belongs to the fluoride channel Fluc/FEX (TC 1.A.43) family.

It is found in the cell inner membrane. The enzyme catalyses fluoride(in) = fluoride(out). With respect to regulation, na(+) is not transported, but it plays an essential structural role and its presence is essential for fluoride channel function. Fluoride-specific ion channel. Important for reducing fluoride concentration in the cell, thus reducing its toxicity. The sequence is that of Fluoride-specific ion channel FluC from Haemophilus influenzae (strain ATCC 51907 / DSM 11121 / KW20 / Rd).